The primary structure comprises 417 residues: Zinc finger protein CONSTANS-LIKE 16 (417 aa).

4 residues coordinate Zn(2+): cysteine 17, cysteine 20, cysteine 40, and histidine 45. The segment at 17–59 (CDSCVKRRARWYCAADDAFLCQSCDSLVHSANPLARRHERVRL) adopts a B box-type; atypical zinc-finger fold. The tract at residues 63–105 (SPAVVKHSNHSSASPPHEVATWHHGFTRKARTPRGSGKKNNSS) is disordered. Residues 212-239 (LSNSEMFKIEKDEIEEEVEEIKAMSMDI) adopt a coiled-coil conformation. Residues 361-403 (REARVSRYREKRRTRLFSKKIRYEVRKLNAEKRPRMKGRFVKR) enclose the CCT domain.

It belongs to the CONSTANS family.

It is found in the nucleus. This chain is Zinc finger protein CONSTANS-LIKE 16 (COL16), found in Arabidopsis thaliana (Mouse-ear cress).